Consider the following 388-residue polypeptide: Phosphoribosylformylglycinamidine cyclo-ligase, chloroplastic/mitochondrial (388 aa).

The protein belongs to the AIR synthase family.

It is found in the plastid. The protein localises to the chloroplast. It localises to the mitochondrion. It catalyses the reaction 2-formamido-N(1)-(5-O-phospho-beta-D-ribosyl)acetamidine + ATP = 5-amino-1-(5-phospho-beta-D-ribosyl)imidazole + ADP + phosphate + H(+). It functions in the pathway purine metabolism; IMP biosynthesis via de novo pathway; 5-amino-1-(5-phospho-D-ribosyl)imidazole from N(2)-formyl-N(1)-(5-phospho-D-ribosyl)glycinamide: step 2/2. This Vigna unguiculata (Cowpea) protein is Phosphoribosylformylglycinamidine cyclo-ligase, chloroplastic/mitochondrial (PUR5).